A 427-amino-acid polypeptide reads, in one-letter code: Citrate synthase (427 aa).

Catalysis depends on residues His-306 and Asp-363.

Belongs to the citrate synthase family. As to quaternary structure, homohexamer.

The catalysed reaction is oxaloacetate + acetyl-CoA + H2O = citrate + CoA + H(+). The protein operates within carbohydrate metabolism; tricarboxylic acid cycle; isocitrate from oxaloacetate: step 1/2. Its activity is regulated as follows. Allosterically inhibited by NADH. The sequence is that of Citrate synthase (gltA) from Salmonella typhimurium (strain LT2 / SGSC1412 / ATCC 700720).